Here is a 275-residue protein sequence, read N- to C-terminus: Large ribosomal subunit protein uL2 (275 aa).

Residues 208–275 are disordered; that stretch reads AGAKRWRGRR…NMIIRDRRKK (68 aa). Composition is skewed to basic residues over residues 209–219 and 254–263; these read GAKRWRGRRPT and KGYKTRRNKR.

The protein belongs to the universal ribosomal protein uL2 family. Part of the 50S ribosomal subunit. Forms a bridge to the 30S subunit in the 70S ribosome.

Its function is as follows. One of the primary rRNA binding proteins. Required for association of the 30S and 50S subunits to form the 70S ribosome, for tRNA binding and peptide bond formation. It has been suggested to have peptidyltransferase activity; this is somewhat controversial. Makes several contacts with the 16S rRNA in the 70S ribosome. The chain is Large ribosomal subunit protein uL2 from Coxiella burnetii (strain CbuG_Q212) (Coxiella burnetii (strain Q212)).